The chain runs to 870 residues: Rho GTPase-activating protein 7 (870 aa).

In terms of domain architecture, PH spans 18–125 (TVFKSGPLFI…WKTALEQALA (108 aa)). The Rho-GAP domain occupies 167–367 (LALEDIDGSP…VLLEDYGSIF (201 aa)). Disordered stretches follow at residues 378–432 (STES…SGCT) and 446–465 (DSDI…SNIR). Positions 407–417 (NEVEPVTDDDN) are enriched in acidic residues. Positions 569 to 693 (GEDELAIQRL…HQLNQQRQTH (125 aa)) form a coiled coil. Residues 736–793 (HEENVLGAEWRNSKGAGSFGVGNSRQPSRKQIPESTNTTDSKISEESGKISVDKLSSI) form a disordered region. A compositionally biased stretch (basic and acidic residues) spans 777–787 (KISEESGKISV).

Functionally, acts as a GTPase activator for the Rac-type GTPase by converting it to an inactive GDP-bound state. The protein is Rho GTPase-activating protein 7 (ROPGAP7) of Arabidopsis thaliana (Mouse-ear cress).